A 35-amino-acid polypeptide reads, in one-letter code: Beta-theraphotoxin-Hlv1a (35 aa).

3 disulfide bridges follow: Cys-2/Cys-17, Cys-9/Cys-24, and Cys-16/Cys-31.

It belongs to the neurotoxin 10 (Hwtx-1) family. 10 (haplotoxin-1) subfamily. As to expression, expressed by the venom gland.

The protein localises to the secreted. Functionally, spider venom neurotoxin that blocks voltage-gated sodium channel Nav1.3/SCN3A in human (IC(50)=1 uM) and rat (IC(50)=1 uM). The polypeptide is Beta-theraphotoxin-Hlv1a (Cyriopagopus lividus (Cobalt blue tarantula)).